The sequence spans 295 residues: MSDKLHLVIVTGMSGAGKTVAIQSFEDLGYFTIDNMPPTLLPKFLELIRHSQDNNKIALVVDMRSRSFFSEIREVLDEIEGAEDLDFKVLFLDATDSELVARYKETRRSHPLAADGRVLDGIQLERELLAPLKNMSQNVIDTTELTPRNLRKVISEQFASQDNQPSFRIEVMSFGFKYGLPLDADLVFDVRFLPNPYYKLELRNLTGLDAPVFDYVMEHQESEEFYSHLLGLIEPILPGYQKEGKSVLTIAVGCTGGQHRSVAFAKRLADDLEKNWNVNRSHRDKDRRKETVNRS.

Position 12-19 (12-19) interacts with ATP; that stretch reads GMSGAGKT. 62 to 65 lines the GTP pocket; that stretch reads DMRS.

It belongs to the RapZ-like family.

In terms of biological role, displays ATPase and GTPase activities. This chain is Nucleotide-binding protein SSU98_0619, found in Streptococcus suis (strain 98HAH33).